The sequence spans 424 residues: UDP-N-acetylglucosamine 1-carboxyvinyltransferase (424 aa).

Residue 22 to 23 (KN) coordinates phosphoenolpyruvate. R93 serves as a coordination point for UDP-N-acetyl-alpha-D-glucosamine. Residue C117 is the Proton donor of the active site. C117 carries the post-translational modification 2-(S-cysteinyl)pyruvic acid O-phosphothioketal. UDP-N-acetyl-alpha-D-glucosamine-binding positions include 162–165 (KVSV), D307, and I329.

The protein belongs to the EPSP synthase family. MurA subfamily.

It localises to the cytoplasm. It catalyses the reaction phosphoenolpyruvate + UDP-N-acetyl-alpha-D-glucosamine = UDP-N-acetyl-3-O-(1-carboxyvinyl)-alpha-D-glucosamine + phosphate. It functions in the pathway cell wall biogenesis; peptidoglycan biosynthesis. Functionally, cell wall formation. Adds enolpyruvyl to UDP-N-acetylglucosamine. The sequence is that of UDP-N-acetylglucosamine 1-carboxyvinyltransferase from Actinobacillus pleuropneumoniae serotype 7 (strain AP76).